Here is a 240-residue protein sequence, read N- to C-terminus: Phosducin-like protein 2 (240 aa).

Residues 38–201 (QQEAMVKPYE…LEWKLSEVGA (164 aa)) form the Phosducin domain. The interval 89–240 (FGELREISGN…DSSGSDTEAK (152 aa)) is thioredoxin fold.

The protein belongs to the phosducin family. As to quaternary structure, interacts with the CCT chaperonin complex and actin. In terms of tissue distribution, testis-specific (at protein level).

The protein localises to the endoplasmic reticulum. Essential for male fertility, spermiogenesis and acrosome formation. The protein is Phosducin-like protein 2 (Pdcl2) of Mus musculus (Mouse).